The primary structure comprises 474 residues: PTS system N-acetylmuramic acid-specific EIIBC component (474 aa).

Positions 1–89 (MAKEISSELL…SELLGDAPVQ (89 aa)) constitute a PTS EIIB type-1 domain. Residues 1–123 (MAKEISSELL…LAKFATIFTP (123 aa)) lie on the Cytoplasmic side of the membrane. The active-site Phosphocysteine intermediate; for EIIB activity is the C29. Residues 115-474 (AKFATIFTPL…LFGCRNVNLD (360 aa)) form the PTS EIIC type-1 domain. A helical membrane pass occupies residues 124–144 (LIPGFIAAGLLLGIATLIATV). Residues 145–157 (MHVPADAQGTLPD) lie on the Periplasmic side of the membrane. The chain crosses the membrane as a helical span at residues 158-178 (ALNFMKVFSKGLFTFLVILVG). The Cytoplasmic segment spans residues 179 to 180 (YN). A helical membrane pass occupies residues 181 to 201 (AAQAFGGTGVNGAIIAALFLL). At 202-217 (GYNPAATTGYYAGFHD) the chain is on the periplasmic side. Residues 218 to 238 (FFGLPIDPRGNIIGVLIAAWA) traverse the membrane as a helical segment. Residues 239-260 (CARIEGMVRRFMPDDLDMLLTS) are Cytoplasmic-facing. The chain crosses the membrane as a helical span at residues 261–281 (LITLLITATLAYLIIMPLGGW). Over 282 to 301 (LFEGMSWLFMHLNSNPFGCA) the chain is Periplasmic. Residues 302-322 (VLAGLFLIAVVFGVHQGFIPV) form a helical membrane-spanning segment. At 323-334 (YLALMDSQGFNS) the chain is on the cytoplasmic side. Residues 335 to 355 (LFPILSMAGAGQVGAALALYW) traverse the membrane as a helical segment. Residues 356–368 (RAQPHSALRSQVR) lie on the Periplasmic side of the membrane. A helical transmembrane segment spans residues 369–389 (GAIIPGLLGVGEPLIYGVTLP). Over 390-393 (RMKP) the chain is Cytoplasmic. Residues 394-414 (FVTACLGGAAGGLFIGLIAWW) form a helical membrane-spanning segment. Residues 415 to 440 (GLPMGLNSAFGPSGLVALPLMTSAQG) lie on the Periplasmic side of the membrane. The helical transmembrane segment at 441-461 (ILPAMAVYAGGILVAWVCGFI) threads the bilayer. Over 462–474 (FTTLFGCRNVNLD) the chain is Cytoplasmic.

The protein resides in the cell inner membrane. It carries out the reaction N-acetyl-beta-D-muramate(out) + N(pros)-phospho-L-histidyl-[protein] = N-acetyl-beta-D-muramate 6-phosphate(in) + L-histidyl-[protein]. Its function is as follows. The phosphoenolpyruvate-dependent sugar phosphotransferase system (sugar PTS), a major carbohydrate active transport system, catalyzes the phosphorylation of incoming sugar substrates concomitantly with their translocation across the cell membrane. This system is involved in N-acetylmuramic acid (MurNAc) transport, yielding cytoplasmic MurNAc-6-P. Is also able to take up anhydro-N-acetylmuramic acid (anhMurNAc), but cannot phosphorylate the carbon 6, probably because of the 1,6-anhydro ring. In Shigella flexneri, this protein is PTS system N-acetylmuramic acid-specific EIIBC component (murP).